A 131-amino-acid polypeptide reads, in one-letter code: Glycine cleavage system H protein (131 aa).

The Lipoyl-binding domain maps to 24 to 106 (RAIVGISDHA…YGEGWIMVIE (83 aa)). Lys65 carries the N6-lipoyllysine modification.

This sequence belongs to the GcvH family. The glycine cleavage system is composed of four proteins: P, T, L and H. (R)-lipoate is required as a cofactor.

In terms of biological role, the glycine cleavage system catalyzes the degradation of glycine. The H protein shuttles the methylamine group of glycine from the P protein to the T protein. The polypeptide is Glycine cleavage system H protein (Xylella fastidiosa (strain M12)).